Here is a 338-residue protein sequence, read N- to C-terminus: Ketol-acid reductoisomerase (NADP(+)) (338 aa).

Positions 1 to 181 (MKVFYDKDAD…GGGKAGIIET (181 aa)) constitute a KARI N-terminal Rossmann domain. NADP(+)-binding positions include 24–27 (YGSQ), Arg47, and Ser52. His107 is an active-site residue. Gly133 contributes to the NADP(+) binding site. The KARI C-terminal knotted domain occupies 182–327 (NFREETETDL…EKLRAMMPWI (146 aa)). Mg(2+)-binding residues include Asp190, Glu194, Glu226, and Glu230. Position 251 (Ser251) interacts with substrate.

The protein belongs to the ketol-acid reductoisomerase family. Mg(2+) is required as a cofactor.

It carries out the reaction (2R)-2,3-dihydroxy-3-methylbutanoate + NADP(+) = (2S)-2-acetolactate + NADPH + H(+). It catalyses the reaction (2R,3R)-2,3-dihydroxy-3-methylpentanoate + NADP(+) = (S)-2-ethyl-2-hydroxy-3-oxobutanoate + NADPH + H(+). Its pathway is amino-acid biosynthesis; L-isoleucine biosynthesis; L-isoleucine from 2-oxobutanoate: step 2/4. It participates in amino-acid biosynthesis; L-valine biosynthesis; L-valine from pyruvate: step 2/4. Its function is as follows. Involved in the biosynthesis of branched-chain amino acids (BCAA). Catalyzes an alkyl-migration followed by a ketol-acid reduction of (S)-2-acetolactate (S2AL) to yield (R)-2,3-dihydroxy-isovalerate. In the isomerase reaction, S2AL is rearranged via a Mg-dependent methyl migration to produce 3-hydroxy-3-methyl-2-ketobutyrate (HMKB). In the reductase reaction, this 2-ketoacid undergoes a metal-dependent reduction by NADPH to yield (R)-2,3-dihydroxy-isovalerate. The chain is Ketol-acid reductoisomerase (NADP(+)) from Leptothrix cholodnii (strain ATCC 51168 / LMG 8142 / SP-6) (Leptothrix discophora (strain SP-6)).